The chain runs to 1233 residues: Structural maintenance of chromosomes protein 1A (1233 aa).

32-39 (GPNGSGKS) contacts ATP. Coiled coils occupy residues 104-124 (EYKI…LEKL) and 163-503 (ELAQ…KAEI). The span at 284–293 (IKEKDSELNQ) shows a compositional bias: basic and acidic residues. 2 disordered regions span residues 284 to 308 (IKEK…TSHK) and 348 to 369 (QEFE…TLEE). 2 positions are modified to phosphoserine: serine 358 and serine 360. The SMC hinge domain occupies 515-629 (VYGRLIDLCQ…DNVEDARRIA (115 aa)). Residues lysine 648 and lysine 713 each carry the N6-acetyllysine modification. A coiled-coil region spans residues 660-935 (KAKARRWDEK…RHNLLQACKM (276 aa)). Residues 947 to 966 (MDDISQEEGSSQGEDSVSGS) form a disordered region. The segment covering 953-966 (EEGSSQGEDSVSGS) has biased composition (low complexity). At serine 957 the chain carries Phosphoserine; by ATM. Position 962 is a phosphoserine (serine 962). Position 966 is a phosphoserine; by ATM and ATR (serine 966). Phosphoserine is present on serine 970. The stretch at 991-1068 (KDAQAEEEIK…FEQIKKERFD (78 aa)) forms a coiled coil. N6-acetyllysine is present on lysine 1037.

This sequence belongs to the SMC family. SMC1 subfamily. In terms of assembly, forms a heterodimer with SMC3 in cohesin complexes. Cohesin complexes are composed of the SMC1 (SMC1A or SMC1B) and SMC3 heterodimer attached via their SMC hinge domain, RAD21 which link them, and one STAG protein (STAG1, STAG2 or STAG3), which interacts with RAD21. In germ cell cohesin complexes, SMC1A is mutually exclusive with SMC1B. Interacts with BRCA1. Found in a complex with CDCA5, SMC3 and RAD21, PDS5A/SCC-112 and PDS5B/APRIN. Interacts with NDC80. Interacts with BRAT1. Found in a complex containing POLE and SMC3. Interacts with RPGR, STAG3 and SYCP2. The cohesin complex interacts with the cohesin loading complex subunits NIPBL/Scc2 (via HEAT repeats) and MAU2/Scc4. NIPBL directly contacts all members of the complex, RAD21, SMC1A/B, SMC3 and STAG1. Ubiquitinated by the DCX(DCAF15) complex, leading to its degradation. In terms of processing, phosphorylated by ATM upon ionizing radiation in a NBS1-dependent manner. Phosphorylated by ATR upon DNA methylation in a MSH2/MSH6-dependent manner. Phosphorylation of Ser-957 and Ser-966 activates it and is required for S-phase checkpoint activation.

It is found in the nucleus. It localises to the chromosome. The protein localises to the centromere. Its subcellular location is the kinetochore. Involved in chromosome cohesion during cell cycle and in DNA repair. Central component of cohesin complex. The cohesin complex is required for the cohesion of sister chromatids after DNA replication. The cohesin complex apparently forms a large proteinaceous ring within which sister chromatids can be trapped. At anaphase, the complex is cleaved and dissociates from chromatin, allowing sister chromatids to segregate. The cohesin complex may also play a role in spindle pole assembly during mitosis. Involved in DNA repair via its interaction with BRCA1 and its related phosphorylation by ATM, or via its phosphorylation by ATR. Works as a downstream effector both in the ATM/NBS1 branch and in the ATR/MSH2 branch of S-phase checkpoint. The chain is Structural maintenance of chromosomes protein 1A (SMC1A) from Homo sapiens (Human).